The sequence spans 31 residues: Cytochrome b6-f complex subunit 6 (31 aa).

Residues 4-26 (ITSYFGFLLAASTITPALLIGLN) form a helical membrane-spanning segment.

It belongs to the PetL family. As to quaternary structure, the 4 large subunits of the cytochrome b6-f complex are cytochrome b6, subunit IV (17 kDa polypeptide, PetD), cytochrome f and the Rieske protein, while the 4 small subunits are PetG, PetL, PetM and PetN. The complex functions as a dimer.

The protein resides in the plastid. It localises to the chloroplast thylakoid membrane. In terms of biological role, component of the cytochrome b6-f complex, which mediates electron transfer between photosystem II (PSII) and photosystem I (PSI), cyclic electron flow around PSI, and state transitions. PetL is important for photoautotrophic growth as well as for electron transfer efficiency and stability of the cytochrome b6-f complex. This is Cytochrome b6-f complex subunit 6 from Calycanthus floridus var. glaucus (Eastern sweetshrub).